A 76-amino-acid polypeptide reads, in one-letter code: Membrane protein UL43 homolog (76 aa).

Transmembrane regions (helical) follow at residues 7–27 (AVCV…SLAF) and 54–74 (ISRW…ATII).

The protein belongs to the alphaherpesvirinae HHV-1 UL43 family.

It is found in the membrane. This Equus caballus (Horse) protein is Membrane protein UL43 homolog.